A 264-amino-acid polypeptide reads, in one-letter code: Small ribosomal subunit protein uS2 (264 aa).

Belongs to the universal ribosomal protein uS2 family.

This is Small ribosomal subunit protein uS2 from Latilactobacillus sakei subsp. sakei (strain 23K) (Lactobacillus sakei subsp. sakei).